Consider the following 185-residue polypeptide: Ribosome-recycling factor (185 aa).

It belongs to the RRF family.

The protein resides in the cytoplasm. Responsible for the release of ribosomes from messenger RNA at the termination of protein biosynthesis. May increase the efficiency of translation by recycling ribosomes from one round of translation to another. In Aliivibrio salmonicida (strain LFI1238) (Vibrio salmonicida (strain LFI1238)), this protein is Ribosome-recycling factor.